The primary structure comprises 395 residues: Hdr-like menaquinol oxidoreductase integral membrane subunit (395 aa).

Transmembrane regions (helical) follow at residues 15–35, 57–77, 88–108, 126–146, 158–178, 196–216, 231–251, 274–294, 305–325, and 364–384; these read YFALVIILAAVTALGFYAYVL, IPYFIGLSAGSLIVSALAGVF, IAAYMAAAWIIAAILSIALDI, IFSWNAFLYSSYFVICSIYLL, FMAGLAVFWAVLVHSGTGAIY, FIVCAITSGLGLLLANLYFTF, LALIFAGLMMVLGYFLAVEGL, VFWSFWLLVIFGIAIPIIIVL, ITFAGILHAALVFAERFYLII, and IGLIAMVYLIFVVGVKLFALI.

This sequence belongs to the NrfD family. Consists of five subunits: an integral membrane subunit, a cytochrome b-like subunit, a cytochrome c subunit and two iron-sulfur subunits.

The protein resides in the cell membrane. Its function is as follows. Has menaquinol-oxidizing activity. HmeB subunit may function as a menaquinol-oxidizing site. HmeA, HmeB and HmeE subunits may together catalyze electron transfer from menaquinol to cytochrome c. In Archaeoglobus fulgidus (strain ATCC 49558 / DSM 4304 / JCM 9628 / NBRC 100126 / VC-16), this protein is Hdr-like menaquinol oxidoreductase integral membrane subunit (hmeB).